Reading from the N-terminus, the 263-residue chain is Acyl-[acyl-carrier-protein]--UDP-N-acetylglucosamine O-acyltransferase (263 aa).

The protein belongs to the transferase hexapeptide repeat family. LpxA subfamily. In terms of assembly, homotrimer.

It localises to the cytoplasm. It carries out the reaction a (3R)-hydroxyacyl-[ACP] + UDP-N-acetyl-alpha-D-glucosamine = a UDP-3-O-[(3R)-3-hydroxyacyl]-N-acetyl-alpha-D-glucosamine + holo-[ACP]. Its pathway is glycolipid biosynthesis; lipid IV(A) biosynthesis; lipid IV(A) from (3R)-3-hydroxytetradecanoyl-[acyl-carrier-protein] and UDP-N-acetyl-alpha-D-glucosamine: step 1/6. Its function is as follows. Involved in the biosynthesis of lipid A, a phosphorylated glycolipid that anchors the lipopolysaccharide to the outer membrane of the cell. This chain is Acyl-[acyl-carrier-protein]--UDP-N-acetylglucosamine O-acyltransferase, found in Campylobacter jejuni (strain RM1221).